A 92-amino-acid polypeptide reads, in one-letter code: Progonadoliberin-1 (92 aa).

An N-terminal signal peptide occupies residues 1–23; the sequence is MGLIPKLLAGLVLLTLCVENGSG. The residue at position 24 (Gln24) is a Pyrrolidone carboxylic acid. Position 33 is a glycine amide (Gly33).

This sequence belongs to the GnRH family. Post-translationally, the precursor is cleaved by ACE, which removes the Gly-Lys-Arg peptide at the C-terminus, leading to mature hormone. The mature form of Gonadoliberin-1 is also cleaved and degraded by ACE.

It localises to the secreted. Its function is as follows. Stimulates the secretion of gonadotropins; it stimulates the secretion of both luteinizing and follicle-stimulating hormones. The chain is Progonadoliberin-1 (GNRH1) from Cavia porcellus (Guinea pig).